Reading from the N-terminus, the 478-residue chain is Cytochrome c-552 (478 aa).

The N-terminal stretch at 1-26 (MTRIKINARRIFSLLIPFFFFTSVHA) is a signal peptide. His94 lines the heme c pocket. The heme site is built by Cys122, Cys125, and Lys126. Heme c contacts are provided by Cys160, Cys163, His164, Cys209, Cys212, and His213. Positions 215, 216, 261, and 263 each coordinate Ca(2+). Residue Tyr216 coordinates substrate. His264 contacts substrate. Heme c contacts are provided by His275, Cys282, Cys285, His286, His301, Cys314, Cys317, His318, and His393.

The protein belongs to the cytochrome c-552 family. It depends on Ca(2+) as a cofactor. Requires heme c as cofactor.

The protein resides in the periplasm. The enzyme catalyses 6 Fe(III)-[cytochrome c] + NH4(+) + 2 H2O = 6 Fe(II)-[cytochrome c] + nitrite + 8 H(+). The protein operates within nitrogen metabolism; nitrate reduction (assimilation). Its function is as follows. Catalyzes the reduction of nitrite to ammonia, consuming six electrons in the process. The sequence is that of Cytochrome c-552 from Escherichia coli O157:H7 (strain EC4115 / EHEC).